The chain runs to 75 residues: UPF0729 protein C18orf32 homolog (75 aa).

A necessary for its localzation to the endoplasmic reticulum and lipid droplets region spans residues 1–37 (MVCIPCIVIPVLLWVYKRFLEPVLYPIISPIISRFWR). Polar residues predominate over residues 43 to 65 (DTPQQKTSTAECNGAANGSTANG). The tract at residues 43-75 (DTPQQKTSTAECNGAANGSTANGPKTVADKKAD) is disordered.

It belongs to the UPF0729 family.

It localises to the endoplasmic reticulum. Its subcellular location is the lipid droplet. The chain is UPF0729 protein C18orf32 homolog from Danio rerio (Zebrafish).